The sequence spans 325 residues: tRNA dimethylallyltransferase (325 aa).

11-18 (GPTASGKS) provides a ligand contact to ATP. 13–18 (TASGKS) is a substrate binding site. Interaction with substrate tRNA stretches follow at residues 36–39 (DSMQ) and 160–164 (QRLIR).

It belongs to the IPP transferase family. In terms of assembly, monomer. Mg(2+) is required as a cofactor.

It carries out the reaction adenosine(37) in tRNA + dimethylallyl diphosphate = N(6)-dimethylallyladenosine(37) in tRNA + diphosphate. In terms of biological role, catalyzes the transfer of a dimethylallyl group onto the adenine at position 37 in tRNAs that read codons beginning with uridine, leading to the formation of N6-(dimethylallyl)adenosine (i(6)A). In Rickettsia canadensis (strain McKiel), this protein is tRNA dimethylallyltransferase.